The following is a 170-amino-acid chain: Peptide deformylase (170 aa).

The Fe cation site is built by cysteine 94 and histidine 136. The active site involves glutamate 137. Histidine 140 is a Fe cation binding site.

This sequence belongs to the polypeptide deformylase family. Requires Fe(2+) as cofactor.

The catalysed reaction is N-terminal N-formyl-L-methionyl-[peptide] + H2O = N-terminal L-methionyl-[peptide] + formate. Its function is as follows. Removes the formyl group from the N-terminal Met of newly synthesized proteins. Requires at least a dipeptide for an efficient rate of reaction. N-terminal L-methionine is a prerequisite for activity but the enzyme has broad specificity at other positions. This chain is Peptide deformylase, found in Xylella fastidiosa (strain M12).